A 633-amino-acid chain; its full sequence is MTAVLFLCFLLICFSFTPSLQNVSESEPLVRFKRSVNITKGDLNSWRTGTDPCNGKWFGIYCQKGQTVSGIHVTRLGLSGTINIEDLKDLPNLRTIRLDNNLLSGPLPPFFKLPGLKSLLLSNNSFSGEIADDFFKETPQLKRVFLDNNRLSGKIPASLMQLAGLEELHMQGNQFTGEIPPLTDGNKVLKSLDLSNNDLEGEIPITISDRKNLEMKFEGNQRLCGSPLNIECDEKPSSTGSGNEKNNTAKAIFMVILFLLIFLFVVAIITRWKKKRQPEFRMLGKDHLSDQESVEVRVPDSIKKPIDSSKKRSNAEGSSKKGSSHNGKGAGGGPGSGMGDIIMVNSEKGSFGLPDLMKAAAEVLGNGSLGSAYKAVMANGLSVVVKRIRDMNKLAREAFDTEMQRFGKLRHPNVLTPLAYHYRREEKLVVSEYMPKSSLLYVLHGDRGVYHSELTWATRLKIIQGVARGMDFLHEEFASYDLPHGNLKSSNVLLSETYEPLISDYAFLPLLQPNNASQALFAFKSPEFVQNQQVSPKSDVYCLGIIVLEVMTGKFPSQYLNTGKGGTDIVEWVQSSIAQHKEEELIDPEIASNTDSIKQMVELLRIGAACIASNPNERQNMKEIVRRIERVTL.

Residues 1 to 19 (MTAVLFLCFLLICFSFTPS) form the signal peptide. Asn-22 and Asn-37 each carry an N-linked (GlcNAc...) asparagine glycan. Residues Cys-53 and Cys-62 are joined by a disulfide bond. LRR repeat units follow at residues 90–115 (LPNLRTIRLDNNLLSGPLPPFFKLPG), 117–137 (KSLLLSNNSFSGEIADDFFKE), 138–162 (TPQLKRVFLDNNRLSGKIPASLMQL), 163–186 (AGLEELHMQGNQFTGEIPPLTDGN), and 188–210 (VLKSLDLSNNDLEGEIPITISDR). An N-linked (GlcNAc...) asparagine glycan is attached at Asn-123. An intrachain disulfide couples Cys-224 to Cys-232. N-linked (GlcNAc...) asparagine glycosylation occurs at Asn-246. The chain crosses the membrane as a helical span at residues 249–269 (AKAIFMVILFLLIFLFVVAII). Over residues 294 to 314 (VEVRVPDSIKKPIDSSKKRSN) the composition is skewed to basic and acidic residues. The tract at residues 294 to 339 (VEVRVPDSIKKPIDSSKKRSNAEGSSKKGSSHNGKGAGGGPGSGMG) is disordered. Positions 328–338 (KGAGGGPGSGM) are enriched in gly residues. The Protein kinase domain occupies 358–633 (KAAAEVLGNG…IVRRIERVTL (276 aa)). ATP contacts are provided by residues 364–372 (LGNGSLGSA) and Lys-386. Ser-438 is subject to Phosphoserine. The residue at position 458 (Thr-458) is a Phosphothreonine. Position 535 is a phosphoserine (Ser-535).

The protein belongs to the protein kinase superfamily. Ser/Thr protein kinase family. As to quaternary structure, interacts in vitro with ROPGEF1 (via PRONE domain). Interacts with PRK6. As to expression, expressed in pollen and/or in flowers, but not in leaves.

Its subcellular location is the membrane. The enzyme catalyses L-seryl-[protein] + ATP = O-phospho-L-seryl-[protein] + ADP + H(+). The catalysed reaction is L-threonyl-[protein] + ATP = O-phospho-L-threonyl-[protein] + ADP + H(+). With respect to regulation, the phosphorylation activity is calcium-independent. Receptor-like kinase involved in the control of pollen germination and pollen tube polar growth. Can phosphorylate ROPGEF1 in vitro. The chain is Pollen receptor-like kinase 3 from Arabidopsis thaliana (Mouse-ear cress).